Here is a 226-residue protein sequence, read N- to C-terminus: 6-carboxyhexanoate--CoA ligase (226 aa).

Belongs to the BioW family. Homodimer. Mg(2+) is required as a cofactor.

It catalyses the reaction heptanedioate + ATP + CoA = 6-carboxyhexanoyl-CoA + AMP + diphosphate. It functions in the pathway metabolic intermediate metabolism; pimeloyl-CoA biosynthesis; pimeloyl-CoA from pimelate: step 1/1. Catalyzes the transformation of pimelate into pimeloyl-CoA with concomitant hydrolysis of ATP to AMP. The sequence is that of 6-carboxyhexanoate--CoA ligase from Methanocaldococcus infernus (strain DSM 11812 / JCM 15783 / ME).